Here is a 579-residue protein sequence, read N- to C-terminus: Pre-mRNA-processing factor 17 (579 aa).

Residues Met1 to Glu19 are compositionally biased toward low complexity. Disordered stretches follow at residues Met1–Lys47 and Asp204–Glu237. Ser46 is subject to Phosphoserine. WD repeat units lie at residues Gly286–Arg326, Gly330–Arg369, Thr371–Glu413, Arg416–Tyr455, Pro459–Lys498, Gly504–Arg545, and Ala548–Trp578.

In terms of assembly, component of the pre-catalytic and catalytic spliceosome complexes. Component of the postcatalytic spliceosome P complex. Interacts with PPIL1; this interaction leads to CDC40 isomerization. Post-translationally, undergoes isomerization of the peptide bond between Gly-94 and Pro-95. The reaction is catalyzed by PPIL1.

The protein resides in the nucleus. It localises to the nucleus speckle. In terms of biological role, required for pre-mRNA splicing as component of the activated spliceosome. Plays an important role in embryonic brain development; this function does not require proline isomerization. This is Pre-mRNA-processing factor 17 (CDC40) from Homo sapiens (Human).